A 262-amino-acid polypeptide reads, in one-letter code: Ribosomal RNA small subunit methyltransferase A (262 aa).

S-adenosyl-L-methionine is bound by residues asparagine 14, leucine 16, glycine 41, glutamate 63, aspartate 85, and asparagine 105.

It belongs to the class I-like SAM-binding methyltransferase superfamily. rRNA adenine N(6)-methyltransferase family. RsmA subfamily.

It is found in the cytoplasm. The catalysed reaction is adenosine(1518)/adenosine(1519) in 16S rRNA + 4 S-adenosyl-L-methionine = N(6)-dimethyladenosine(1518)/N(6)-dimethyladenosine(1519) in 16S rRNA + 4 S-adenosyl-L-homocysteine + 4 H(+). Specifically dimethylates two adjacent adenosines (A1518 and A1519) in the loop of a conserved hairpin near the 3'-end of 16S rRNA in the 30S particle. May play a critical role in biogenesis of 30S subunits. The chain is Ribosomal RNA small subunit methyltransferase A from Maridesulfovibrio salexigens (strain ATCC 14822 / DSM 2638 / NCIMB 8403 / VKM B-1763) (Desulfovibrio salexigens).